Consider the following 66-residue polypeptide: Large ribosomal subunit protein uL29 (66 aa).

This sequence belongs to the universal ribosomal protein uL29 family.

In Geobacillus thermodenitrificans (strain NG80-2), this protein is Large ribosomal subunit protein uL29.